A 277-amino-acid chain; its full sequence is NH(3)-dependent NAD(+) synthetase (277 aa).

Residue 36–43 (GLSGGIDS) participates in ATP binding. D42 is a Mg(2+) binding site. R118 provides a ligand contact to deamido-NAD(+). Position 138 (T138) interacts with ATP. E143 contributes to the Mg(2+) binding site. ATP-binding residues include K167 and S189.

The protein belongs to the NAD synthetase family. In terms of assembly, homodimer.

It carries out the reaction deamido-NAD(+) + NH4(+) + ATP = AMP + diphosphate + NAD(+) + H(+). It participates in cofactor biosynthesis; NAD(+) biosynthesis; NAD(+) from deamido-NAD(+) (ammonia route): step 1/1. In terms of biological role, catalyzes the ATP-dependent amidation of deamido-NAD to form NAD. Uses ammonia as a nitrogen source. This is NH(3)-dependent NAD(+) synthetase from Chlorobaculum tepidum (strain ATCC 49652 / DSM 12025 / NBRC 103806 / TLS) (Chlorobium tepidum).